Reading from the N-terminus, the 286-residue chain is Perivitellin-2 31 kDa subunit (286 aa).

A signal peptide spans 1 to 30 (MVKKIHFVMERHASIVAFLLAVLALTESQA). Residue asparagine 101 is glycosylated (N-linked (GlcNAc...) asparagine).

It belongs to the tectonin family. Perivitellin-2 is a dimer of heterodimers held together head-to-tail by non-covalent forces. The heterodimer is composed of the tachylectin subunit (31 kDa) and the MACPF subunit (67 kDa) that are disulfide-linked. PV2 is a very high density lipoprotein (VHDL). It contains 3.75% of lipids. The major lipid classes are free sterols and phospholipids and also have significant quantities of energy-providing triacylglycerides and free fatty acids. In terms of tissue distribution, produced by albumen secretory cells. Found in developing eggs.

Its subcellular location is the secreted. The protein resides in the target cell membrane. Functionally, the egg defensive protein perivitellin-2 is a pore-forming two-subunit glycoprotein that affects both the nervous and digestive systems of mammals. In addition, it is a source of both structural and energetic molecules during embryonic development. The tachylectin subunit (31 kDa) binds target membranes while the MACPF subunit (67 kDa) disrupts lipid bilayers forming large pores (inner diameter of about 5.6 nm) altering the plasma membrance conductance. Both in vivo and in vitro, the protein shows wide pH range stability and is resistant to enzymatic proteolysis from gastrointestinal environments. It is cytotoxic to both epithelial and immune cells from the digestive system of mammals. It induces enterocyte death by a lytic mechanism and disrupts enterocyte monolayers in a dose-dependent manner. After oral administration to mice, it binds enterocytes and induces large dose-dependent morphological changes on their small intestine mucosa, reducing the absorptive surface. Additionally, it is detected in the Peyer's patches where it activates lymphoid follicles and triggers apoptosis. The toxin can also traverse the intestinal barrier and induce oral adaptive immunity with evidence of circulating antibody response. The toxin also shows hemagglutination properties thanks to the tachylectin subunit, but has no hemolytic activity. In addition to enterotoxin activity, the toxin also acts as a neurotoxin, since an intraperitoneal injection can induce paralysis of the mice rear limbs, followed by death. The protein is Perivitellin-2 31 kDa subunit of Pomacea maculata (Giant applesnail).